Reading from the N-terminus, the 947-residue chain is Serine/threonine-protein kinase PKH2 (947 aa).

Positions 1 to 14 (MHKFRYSLHQHYSK) are enriched in basic residues. 3 disordered regions span residues 1–43 (MHKF…SSSS), 108–132 (SLGN…LSSH), and 162–212 (FNHL…NEEN). Residues 108-117 (SLGNTTNETG) are compositionally biased toward polar residues. Residues 187–198 (NTEEEENNDDTD) are compositionally biased toward acidic residues. Residues 199-212 (EIPKSETLKQNEEN) show a composition bias toward basic and acidic residues. The Protein kinase domain maps to 240–502 (FKFGKELGEG…IPEIQKHYFF (263 aa)). Residues 250 to 252 (SYS) and lysine 269 contribute to the ATP site. The segment at 271 to 316 (LDKRHIIKEKKVKYVNIEKHALNRLSNRLGVISLYFTFQDKDSLYF) is PIF-pocket. Residues 319–321 (DYA) and glutamate 325 each bind ATP. Catalysis depends on aspartate 364, which acts as the Proton acceptor. Residues glutamate 368 and aspartate 382 each contribute to the ATP site. Composition is skewed to low complexity over residues 550–579 (VKKS…KGSS) and 618–632 (SSTS…SNSN). 4 disordered regions span residues 550–598 (VKKS…STEK), 611–644 (KPAT…QQDY), 660–686 (SVGS…IHQQ), and 794–816 (NMKR…ASTS). Over residues 802–811 (DSKKSMDIER) the composition is skewed to basic and acidic residues.

This sequence belongs to the protein kinase superfamily. AGC Ser/Thr protein kinase family. PDPK1 subfamily.

Its subcellular location is the nucleus. It is found in the cytoplasm. The protein localises to the cell cortex. It catalyses the reaction L-seryl-[protein] + ATP = O-phospho-L-seryl-[protein] + ADP + H(+). The enzyme catalyses L-threonyl-[protein] + ATP = O-phospho-L-threonyl-[protein] + ADP + H(+). Functionally, serine/threonine-protein kinase which is part sphingolipid-mediated signaling pathway that is required for the internalization step of endocytosis by regulating eisosome assembly and organization, and modulating the organization of the plasma membrane. Phosphorylates and activates PKC1. Activates YPK1 and YPK2, 2 components of signaling cascade required for maintenance of cell wall integrity. Required for stress-induced P-body assembly and regulates global mRNA decay at the deadenylation step. This is Serine/threonine-protein kinase PKH2 from Candida albicans (strain SC5314 / ATCC MYA-2876) (Yeast).